The following is a 368-amino-acid chain: tRNA-specific 2-thiouridylase MnmA (368 aa).

Residues 11–18 (GMSGGVDS) and Met-37 contribute to the ATP site. Positions 97–99 (NPD) are interaction with target base in tRNA. Cys-102 acts as the Nucleophile in catalysis. A disulfide bond links Cys-102 and Cys-199. ATP is bound at residue Gly-127. Residues 149-151 (KDQ) are interaction with tRNA. Cys-199 acts as the Cysteine persulfide intermediate in catalysis. The interval 311–312 (RY) is interaction with tRNA.

It belongs to the MnmA/TRMU family. Interacts with TusE.

Its subcellular location is the cytoplasm. It carries out the reaction S-sulfanyl-L-cysteinyl-[protein] + uridine(34) in tRNA + AH2 + ATP = 2-thiouridine(34) in tRNA + L-cysteinyl-[protein] + A + AMP + diphosphate + H(+). Catalyzes the 2-thiolation of uridine at the wobble position (U34) of tRNA(Lys), tRNA(Glu) and tRNA(Gln), leading to the formation of s(2)U34, the first step of tRNA-mnm(5)s(2)U34 synthesis. Sulfur is provided by IscS, via a sulfur-relay system. Binds ATP and its substrate tRNAs. The protein is tRNA-specific 2-thiouridylase MnmA of Salmonella arizonae (strain ATCC BAA-731 / CDC346-86 / RSK2980).